Consider the following 535-residue polypeptide: T-complex protein 1 subunit zeta 1 (535 aa).

The protein belongs to the TCP-1 chaperonin family. In terms of assembly, heterooligomeric complex of about 850 to 900 kDa that forms two stacked rings, 12 to 16 nm in diameter.

The protein localises to the cytoplasm. Its function is as follows. Molecular chaperone; assists the folding of proteins upon ATP hydrolysis. Known to play a role, in vitro, in the folding of actin and tubulin. In Arabidopsis thaliana (Mouse-ear cress), this protein is T-complex protein 1 subunit zeta 1.